The following is a 193-amino-acid chain: Xanthine phosphoribosyltransferase (193 aa).

2 residues coordinate xanthine: leucine 20 and asparagine 27. 129–133 is a 5-phospho-alpha-D-ribose 1-diphosphate binding site; that stretch reads ANGKA. Residue lysine 157 participates in xanthine binding.

The protein belongs to the purine/pyrimidine phosphoribosyltransferase family. Xpt subfamily. Homodimer.

The protein resides in the cytoplasm. It catalyses the reaction XMP + diphosphate = xanthine + 5-phospho-alpha-D-ribose 1-diphosphate. It participates in purine metabolism; XMP biosynthesis via salvage pathway; XMP from xanthine: step 1/1. Converts the preformed base xanthine, a product of nucleic acid breakdown, to xanthosine 5'-monophosphate (XMP), so it can be reused for RNA or DNA synthesis. This is Xanthine phosphoribosyltransferase from Bifidobacterium adolescentis (strain ATCC 15703 / DSM 20083 / NCTC 11814 / E194a).